We begin with the raw amino-acid sequence, 353 residues long: Lysophosphatidic acid receptor 3 (353 aa).

At 1 to 31 the chain is on the extracellular side; that stretch reads MNECHYDKHMDFFYNRSNTDTVDDWTGTKLV. An N-linked (GlcNAc...) asparagine glycan is attached at Asn15. The helical transmembrane segment at 32–52 threads the bilayer; the sequence is IVLCVGTFFCLFIFFSNSLVI. At 53 to 67 the chain is on the cytoplasmic side; it reads AAVIKNRKFHFPFYY. The helical transmembrane segment at 68-88 threads the bilayer; the sequence is LLANLAAADFFAGIAYVFLMF. The Extracellular portion of the chain corresponds to 89–101; that stretch reads NTGPVSKTLTVNR. Residues 102-124 traverse the membrane as a helical segment; it reads WFLRQGLLDSSLTASLTNLLVIA. At 125–146 the chain is on the cytoplasmic side; sequence VERHMSIMRMRVHSNLTKKRVT. A helical transmembrane segment spans residues 147 to 167; it reads LLILLVWAIAIFMGAVPTLGW. Over 168 to 186 the chain is Extracellular; that stretch reads NCLCNISACSSLAPIYSRS. Asn172 carries N-linked (GlcNAc...) asparagine glycosylation. The helical transmembrane segment at 187–207 threads the bilayer; the sequence is YLVFWTVSNLMAFLIMVVVYL. Topologically, residues 208-240 are cytoplasmic; it reads RIYVYVKRKTNVLSPHTSGSISRRRTPMKLMKT. The helical transmembrane segment at 241 to 261 threads the bilayer; sequence VMTVLGAFVVCWTPGLVVLLL. Residues 262–276 are Extracellular-facing; the sequence is DGLNCRQCGVQHVKR. A helical membrane pass occupies residues 277–297; the sequence is WFLLLALLNSVVNPIIYSYKD. Residues 298-353 are Cytoplasmic-facing; that stretch reads EDMYGTMKKMICCFSQENPERRPSRIPSTVLSRSDTGSQYIEDSISQGAVCNKSTS. Cys309 carries the S-palmitoyl cysteine lipid modification.

The protein belongs to the G-protein coupled receptor 1 family. In terms of tissue distribution, most abundantly expressed in prostate, testes, pancreas, and heart, with moderate levels in lung and ovary. No detectable expression in brain, placenta, liver, skeletal muscle, kidney, spleen, thymus, small intestine, colon, or peripheral blood leukocytes.

The protein resides in the cell membrane. Receptor for lysophosphatidic acid (LPA), a mediator of diverse cellular activities. May play a role in the development of ovarian cancer. Seems to be coupled to the G(i)/G(o) and G(q) families of heteromeric G proteins. This is Lysophosphatidic acid receptor 3 (LPAR3) from Homo sapiens (Human).